The following is a 297-amino-acid chain: Coatomer subunit epsilon-2 (297 aa).

The protein belongs to the COPE family. In terms of assembly, oligomeric complex that consists of at least the alpha, beta, beta', gamma, delta, epsilon and zeta subunits.

Its subcellular location is the cytoplasm. The protein localises to the golgi apparatus membrane. It localises to the cytoplasmic vesicle. It is found in the COPI-coated vesicle membrane. Functionally, the coatomer is a cytosolic protein complex that binds to dilysine motifs and reversibly associates with Golgi non-clathrin-coated vesicles, which further mediate biosynthetic protein transport from the ER, via the Golgi up to the trans Golgi network. The coatomer complex is required for budding from Golgi membranes, and is essential for the retrograde Golgi-to-ER transport of dilysine-tagged proteins. The sequence is that of Coatomer subunit epsilon-2 from Oryza sativa subsp. indica (Rice).